The sequence spans 238 residues: Histone H1 (238 aa).

2 stretches are compositionally biased toward low complexity: residues 21-34 (AAVD…AKAP) and 123-132 (AKAPAAVKPK). Disordered stretches follow at residues 21–57 (AAVD…AHPS) and 123–238 (AKAP…KAKK). Residues 54 to 124 (AHPSYAEMVS…KVKGSYKLAK (71 aa)) form the H15 domain. The segment covering 133–197 (TATKKKPAAK…AAKPKAKAAA (65 aa)) has biased composition (basic residues). 2 stretches are compositionally biased toward low complexity: residues 198–208 (KKAPAAATPKK) and 217–230 (KRAT…PAKK).

Belongs to the histone H1/H5 family.

Its subcellular location is the nucleus. The protein resides in the chromosome. Histones H1 are necessary for the condensation of nucleosome chains into higher-order structures. The sequence is that of Histone H1 from Triticum aestivum (Wheat).